A 324-amino-acid polypeptide reads, in one-letter code: Endochitinase 1 (324 aa).

Positions 1–22 are cleaved as a signal peptide; that stretch reads MSFLQALSIFLLLLLYVVVGSA. Residues 23–64 enclose the Chitin-binding type-1 domain; the sequence is EQCGRQAGGALCPGGLCCSQFGWCGSTADYCTVPGCQSQCSG. Cystine bridges form between Cys-25/Cys-40, Cys-34/Cys-46, Cys-39/Cys-53, Cys-58/Cys-62, Cys-95/Cys-158, Cys-170/Cys-178, and Cys-277/Cys-309. Glu-139 functions as the Proton donor in the catalytic mechanism. The propeptide at 318–324 is removed in mature form; that stretch reads GVSVDSM.

Belongs to the glycosyl hydrolase 19 family. Chitinase class I subfamily.

It catalyses the reaction Random endo-hydrolysis of N-acetyl-beta-D-glucosaminide (1-&gt;4)-beta-linkages in chitin and chitodextrins.. Functionally, defense against chitin-containing fungal pathogens. The polypeptide is Endochitinase 1 (Gossypium hirsutum (Upland cotton)).